A 283-amino-acid chain; its full sequence is 4-diphosphocytidyl-2-C-methyl-D-erythritol kinase (283 aa).

Lysine 10 is an active-site residue. ATP is bound at residue 99–109 (PMGGGLGGGSS). Aspartate 141 is an active-site residue.

Belongs to the GHMP kinase family. IspE subfamily. Homodimer.

It carries out the reaction 4-CDP-2-C-methyl-D-erythritol + ATP = 4-CDP-2-C-methyl-D-erythritol 2-phosphate + ADP + H(+). It functions in the pathway isoprenoid biosynthesis; isopentenyl diphosphate biosynthesis via DXP pathway; isopentenyl diphosphate from 1-deoxy-D-xylulose 5-phosphate: step 3/6. In terms of biological role, catalyzes the phosphorylation of the position 2 hydroxy group of 4-diphosphocytidyl-2C-methyl-D-erythritol. This chain is 4-diphosphocytidyl-2-C-methyl-D-erythritol kinase, found in Shigella dysenteriae serotype 1 (strain Sd197).